An 80-amino-acid polypeptide reads, in one-letter code: Small ribosomal subunit protein bS16 (80 aa).

This sequence belongs to the bacterial ribosomal protein bS16 family.

This Blochmanniella pennsylvanica (strain BPEN) protein is Small ribosomal subunit protein bS16.